Consider the following 548-residue polypeptide: Chaperonin GroEL (548 aa).

Residues 30–33 (TLGP), lysine 51, 87–91 (DGTTT), glycine 415, 479–481 (NAA), and aspartate 495 each bind ATP.

Belongs to the chaperonin (HSP60) family. In terms of assembly, forms a cylinder of 14 subunits composed of two heptameric rings stacked back-to-back. Interacts with the co-chaperonin GroES.

It is found in the cytoplasm. The catalysed reaction is ATP + H2O + a folded polypeptide = ADP + phosphate + an unfolded polypeptide.. Its function is as follows. Together with its co-chaperonin GroES, plays an essential role in assisting protein folding. The GroEL-GroES system forms a nano-cage that allows encapsulation of the non-native substrate proteins and provides a physical environment optimized to promote and accelerate protein folding. The chain is Chaperonin GroEL from Escherichia fergusonii (strain ATCC 35469 / DSM 13698 / CCUG 18766 / IAM 14443 / JCM 21226 / LMG 7866 / NBRC 102419 / NCTC 12128 / CDC 0568-73).